The following is a 242-amino-acid chain: Endothelial protein C receptor (242 aa).

An N-terminal signal peptide occupies residues 1 to 17 (MLTKFLPLLLLLLPGCA). Topologically, residues 18–214 (LCNSDGSQSL…GSQTGRSYTS (197 aa)) are extracellular. Asparagine 46, asparagine 63, asparagine 140, asparagine 166, and asparagine 176 each carry an N-linked (GlcNAc...) asparagine glycan. 2 cysteine pairs are disulfide-bonded: cysteine 119/cysteine 190 and cysteine 223/cysteine 236. The helical transmembrane segment at 215–235 (LVLGILMGCFIIAGVAVGIFM) threads the bilayer. Residues 236-242 (CTSGRRC) are Cytoplasmic-facing.

Expressed in endothelial cells.

The protein resides in the membrane. Binds activated protein C. Enhances protein C activation by the thrombin-thrombomodulin complex; plays a role in the protein C pathway controlling blood coagulation. This chain is Endothelial protein C receptor (Procr), found in Mus musculus (Mouse).